The sequence spans 321 residues: Cytochrome c biogenesis protein CcsA (321 aa).

7 helical membrane-spanning segments follow: residues 9 to 29 (ILTH…LITL), 44 to 64 (GMIA…ASSG), 68 to 88 (LSNL…LHMI), 143 to 163 (MLLS…LLMI), 226 to 246 (VISL…VWAN), 260 to 274 (TWAF…IYLH), and 289 to 309 (VASI…LLGI).

The protein belongs to the CcmF/CycK/Ccl1/NrfE/CcsA family. May interact with Ccs1.

The protein resides in the plastid. It is found in the chloroplast thylakoid membrane. In terms of biological role, required during biogenesis of c-type cytochromes (cytochrome c6 and cytochrome f) at the step of heme attachment. The chain is Cytochrome c biogenesis protein CcsA from Oryza sativa (Rice).